The sequence spans 306 residues: Recombination-associated protein RdgC (306 aa).

It belongs to the RdgC family.

The protein localises to the cytoplasm. It localises to the nucleoid. Functionally, may be involved in recombination. The sequence is that of Recombination-associated protein RdgC from Pseudomonas paraeruginosa (strain DSM 24068 / PA7) (Pseudomonas aeruginosa (strain PA7)).